The primary structure comprises 60 residues: Large ribosomal subunit protein bL32 (60 aa).

It belongs to the bacterial ribosomal protein bL32 family.

This is Large ribosomal subunit protein bL32 from Oenococcus oeni (strain ATCC BAA-331 / PSU-1).